The following is a 549-amino-acid chain: Probable protein kinase UbiB (549 aa).

In terms of domain architecture, Protein kinase spans 123-504; that stretch reads DFDETALASA…QRNNTGFSRL (382 aa). ATP-binding positions include 129-137 and Lys-156; that span reads LASASIAQV. Residue Asp-291 is the Proton acceptor of the active site. The helical transmembrane segment at 505–525 threads the bilayer; that stretch reads MILGIAIAGTFWKFEMLPLWV.

It belongs to the ABC1 family. UbiB subfamily.

Its subcellular location is the cell inner membrane. Its pathway is cofactor biosynthesis; ubiquinone biosynthesis [regulation]. In terms of biological role, is probably a protein kinase regulator of UbiI activity which is involved in aerobic coenzyme Q (ubiquinone) biosynthesis. This is Probable protein kinase UbiB from Glaesserella parasuis serovar 5 (strain SH0165) (Haemophilus parasuis).